The primary structure comprises 470 residues: ATP synthase subunit beta (470 aa).

Position 156-163 (156-163 (GGAGVGKT)) interacts with ATP.

It belongs to the ATPase alpha/beta chains family. As to quaternary structure, F-type ATPases have 2 components, CF(1) - the catalytic core - and CF(0) - the membrane proton channel. CF(1) has five subunits: alpha(3), beta(3), gamma(1), delta(1), epsilon(1). CF(0) has three main subunits: a(1), b(2) and c(9-12). The alpha and beta chains form an alternating ring which encloses part of the gamma chain. CF(1) is attached to CF(0) by a central stalk formed by the gamma and epsilon chains, while a peripheral stalk is formed by the delta and b chains.

It localises to the cell inner membrane. It carries out the reaction ATP + H2O + 4 H(+)(in) = ADP + phosphate + 5 H(+)(out). Produces ATP from ADP in the presence of a proton gradient across the membrane. The catalytic sites are hosted primarily by the beta subunits. This Thermosipho africanus (strain TCF52B) protein is ATP synthase subunit beta.